The primary structure comprises 364 residues: MLIFPLINDTSRKIIHIDMDAFFAAVEERDNPALKGKPVVIGKDPRETGGRGVVSTCNYEARKYGIHSAMSCKEAYERCPKAIFISGNYEKYRTVGDQIRRIFKRYTDVVEPMSIDEAYVDVTNNKLGIKSAVKIAKLIQHDMWKEVGLTCSAGVSYNKFLGKLASDFEKPHGLTLVLKEDALCFLAKLPIEKFHGVGKKSVEKLHDMGIYTGQDLLAVPEMTLIDHFGRFGFDLYRKARGISNSPVKSDRIRKSIGSERTYAKLLYQETDIKAEISKNAKRVAALLQDHKKLGKTIVLKVRYADFTTLTKRVTLPELTRNAAQIEQVAGDIFDSLSENPAGIRLLGVTMTNLEDKVADISLDL.

The UmuC domain occupies 14-198; the sequence is IIHIDMDAFF…LPIEKFHGVG (185 aa). Mg(2+) is bound by residues D18 and D116. The active site involves E117.

Belongs to the DNA polymerase type-Y family. Monomer. Mg(2+) serves as cofactor.

The protein localises to the cytoplasm. It catalyses the reaction DNA(n) + a 2'-deoxyribonucleoside 5'-triphosphate = DNA(n+1) + diphosphate. Functionally, poorly processive, error-prone DNA polymerase involved in untargeted mutagenesis. Copies undamaged DNA at stalled replication forks, which arise in vivo from mismatched or misaligned primer ends. These misaligned primers can be extended by PolIV. Exhibits no 3'-5' exonuclease (proofreading) activity. May be involved in translesional synthesis, in conjunction with the beta clamp from PolIII. The protein is DNA polymerase IV of Streptococcus pyogenes serotype M4 (strain MGAS10750).